Reading from the N-terminus, the 299-residue chain is Acetylglutamate kinase (299 aa).

Substrate-binding positions include 72 to 73 (GG), R94, and N196.

It belongs to the acetylglutamate kinase family. ArgB subfamily.

The protein localises to the cytoplasm. It catalyses the reaction N-acetyl-L-glutamate + ATP = N-acetyl-L-glutamyl 5-phosphate + ADP. Its pathway is amino-acid biosynthesis; L-arginine biosynthesis; N(2)-acetyl-L-ornithine from L-glutamate: step 2/4. In terms of biological role, catalyzes the ATP-dependent phosphorylation of N-acetyl-L-glutamate. The chain is Acetylglutamate kinase from Paraburkholderia phymatum (strain DSM 17167 / CIP 108236 / LMG 21445 / STM815) (Burkholderia phymatum).